Consider the following 309-residue polypeptide: Eugenol synthase 2 (309 aa).

Residues 13 to 16, 35 to 45, Arg36, 86 to 88, 111 to 113, Lys134, and 154 to 156 each bind NADP(+); these read TGYI, VRETTVSDPVK, FMQ, SEF, and NCF. The active-site Proton donor/acceptor is the Lys134.

It belongs to the NmrA-type oxidoreductase family. As to expression, mostly expressed in petals, and, to a lower extent, in sepals, stamens and pistils.

The catalysed reaction is eugenol + a carboxylate + NADP(+) = a coniferyl ester + NADPH. It carries out the reaction eugenol + acetate + NADP(+) = (E)-coniferyl acetate + NADPH. It functions in the pathway aromatic compound metabolism; phenylpropanoid biosynthesis. In terms of biological role, catalyzes the synthesis of the phenylpropene eugenol from coniferyl acetate. Phenylpropenes are produced by plants as defense compounds with antimicrobial and antianimal properties, or as floral attractants of pollinators. The sequence is that of Eugenol synthase 2 from Clarkia breweri (Fairy fans).